Here is a 109-residue protein sequence, read N- to C-terminus: Large ribosomal subunit protein uL24 (109 aa).

The protein belongs to the universal ribosomal protein uL24 family. As to quaternary structure, part of the 50S ribosomal subunit.

In terms of biological role, one of two assembly initiator proteins, it binds directly to the 5'-end of the 23S rRNA, where it nucleates assembly of the 50S subunit. Functionally, one of the proteins that surrounds the polypeptide exit tunnel on the outside of the subunit. In Rickettsia bellii (strain RML369-C), this protein is Large ribosomal subunit protein uL24.